A 184-amino-acid chain; its full sequence is Adenine phosphoribosyltransferase (184 aa).

Belongs to the purine/pyrimidine phosphoribosyltransferase family. In terms of assembly, homodimer.

It is found in the cytoplasm. The enzyme catalyses AMP + diphosphate = 5-phospho-alpha-D-ribose 1-diphosphate + adenine. Its pathway is purine metabolism; AMP biosynthesis via salvage pathway; AMP from adenine: step 1/1. Its function is as follows. Catalyzes a salvage reaction resulting in the formation of AMP, that is energically less costly than de novo synthesis. The protein is Adenine phosphoribosyltransferase of Corynebacterium diphtheriae (strain ATCC 700971 / NCTC 13129 / Biotype gravis).